The primary structure comprises 405 residues: uncharacterized protein (405 aa).

The next 13 membrane-spanning stretches (helical) occupy residues 19–39 (IVSI…PLAV), 48–68 (MGFS…ATLL), 85–105 (IVVF…LADI), 106–126 (ASAW…ILGI), 129–149 (SFAG…LHIG), 156–176 (GIVT…CYAW), 178–198 (GLQG…LLAL), 224–244 (GMAL…ITLF), 252–272 (GAAF…LLFP), 283–303 (VAMI…TAAM), 309–329 (IGVL…GVVA), 344–364 (TYTV…GLVM), and 366–386 (WAGV…ALLL).

This sequence belongs to the major facilitator superfamily. YhhS family.

It is found in the cell inner membrane. This is an uncharacterized protein from Salmonella paratyphi C (strain RKS4594).